We begin with the raw amino-acid sequence, 449 residues long: Phosphoglucosamine mutase (449 aa).

Catalysis depends on Ser100, which acts as the Phosphoserine intermediate. Mg(2+) is bound by residues Ser100, Asp241, Asp243, and Asp245. Ser100 is modified (phosphoserine).

This sequence belongs to the phosphohexose mutase family. Mg(2+) serves as cofactor. Activated by phosphorylation.

It carries out the reaction alpha-D-glucosamine 1-phosphate = D-glucosamine 6-phosphate. Catalyzes the conversion of glucosamine-6-phosphate to glucosamine-1-phosphate. This is Phosphoglucosamine mutase from Clostridium kluyveri (strain NBRC 12016).